Here is a 4924-residue protein sequence, read N- to C-terminus: Hydroxamate-type ferrichrome siderophore peptide synthetase (4924 aa).

4 Carrier domains span residues 715-791, 2172-2246, 3254-3328, and 4402-4478; these read NQSE…ILLK, DGFQ…KRRR, NVVE…NTQT, and IHLN…QYEK. O-(pantetheine 4'-phosphoryl)serine is present on residues serine 752, serine 2206, serine 3288, and serine 4439.

It belongs to the ATP-dependent AMP-binding enzyme family.

It is found in the cytoplasm. In terms of biological role, involved in intracellular and extracellular ferrichrome siderophore biosynthesis. This is Hydroxamate-type ferrichrome siderophore peptide synthetase (sib1) from Schizosaccharomyces pombe (strain 972 / ATCC 24843) (Fission yeast).